A 409-amino-acid polypeptide reads, in one-letter code: tRNA-specific 2-thiouridylase MnmA (409 aa).

ATP is bound by residues 43-50 (AMSGGVDS) and Leu-69. Residue Cys-137 is the Nucleophile of the active site. An intrachain disulfide couples Cys-137 to Cys-235. Residue Gly-161 coordinates ATP. An interaction with tRNA region spans residues 185 to 187 (KDQ). Cys-235 acts as the Cysteine persulfide intermediate in catalysis.

It belongs to the MnmA/TRMU family.

Its subcellular location is the cytoplasm. The catalysed reaction is S-sulfanyl-L-cysteinyl-[protein] + uridine(34) in tRNA + AH2 + ATP = 2-thiouridine(34) in tRNA + L-cysteinyl-[protein] + A + AMP + diphosphate + H(+). In terms of biological role, catalyzes the 2-thiolation of uridine at the wobble position (U34) of tRNA, leading to the formation of s(2)U34. In Caulobacter sp. (strain K31), this protein is tRNA-specific 2-thiouridylase MnmA.